We begin with the raw amino-acid sequence, 196 residues long: Glycerol-3-phosphate acyltransferase (196 aa).

The next 5 helical transmembrane spans lie at M1–F21, K53–D73, Y76–I96, V115–F135, and V141–F161.

This sequence belongs to the PlsY family. As to quaternary structure, probably interacts with PlsX.

The protein resides in the cell inner membrane. It carries out the reaction an acyl phosphate + sn-glycerol 3-phosphate = a 1-acyl-sn-glycero-3-phosphate + phosphate. The protein operates within lipid metabolism; phospholipid metabolism. Functionally, catalyzes the transfer of an acyl group from acyl-phosphate (acyl-PO(4)) to glycerol-3-phosphate (G3P) to form lysophosphatidic acid (LPA). This enzyme utilizes acyl-phosphate as fatty acyl donor, but not acyl-CoA or acyl-ACP. The polypeptide is Glycerol-3-phosphate acyltransferase (Hydrogenobaculum sp. (strain Y04AAS1)).